The sequence spans 219 residues: 2-hydroxy-3-keto-5-methylthiopentenyl-1-phosphate phosphatase (219 aa).

Belongs to the HAD-like hydrolase superfamily. MtnX family.

The catalysed reaction is 2-hydroxy-5-methylsulfanyl-3-oxopent-1-enyl phosphate + H2O = 1,2-dihydroxy-5-(methylsulfanyl)pent-1-en-3-one + phosphate. It functions in the pathway amino-acid biosynthesis; L-methionine biosynthesis via salvage pathway; L-methionine from S-methyl-5-thio-alpha-D-ribose 1-phosphate: step 4/6. In terms of biological role, dephosphorylates 2-hydroxy-3-keto-5-methylthiopentenyl-1-phosphate (HK-MTPenyl-1-P) yielding 1,2-dihydroxy-3-keto-5-methylthiopentene (DHK-MTPene). The polypeptide is 2-hydroxy-3-keto-5-methylthiopentenyl-1-phosphate phosphatase (Bacillus thuringiensis (strain Al Hakam)).